A 225-amino-acid polypeptide reads, in one-letter code: ATP-dependent Clp protease proteolytic subunit (225 aa).

The active-site Nucleophile is the Ser-123. His-148 is a catalytic residue.

It belongs to the peptidase S14 family. In terms of assembly, fourteen ClpP subunits assemble into 2 heptameric rings which stack back to back to give a disk-like structure with a central cavity, resembling the structure of eukaryotic proteasomes.

It is found in the cytoplasm. The catalysed reaction is Hydrolysis of proteins to small peptides in the presence of ATP and magnesium. alpha-casein is the usual test substrate. In the absence of ATP, only oligopeptides shorter than five residues are hydrolyzed (such as succinyl-Leu-Tyr-|-NHMec, and Leu-Tyr-Leu-|-Tyr-Trp, in which cleavage of the -Tyr-|-Leu- and -Tyr-|-Trp bonds also occurs).. In terms of biological role, cleaves peptides in various proteins in a process that requires ATP hydrolysis. Has a chymotrypsin-like activity. Plays a major role in the degradation of misfolded proteins. The protein is ATP-dependent Clp protease proteolytic subunit of Chlorobium chlorochromatii (strain CaD3).